The chain runs to 65 residues: Large ribosomal subunit protein bL33c (65 aa).

This sequence belongs to the bacterial ribosomal protein bL33 family.

The protein localises to the plastid. This chain is Large ribosomal subunit protein bL33c, found in Aneura mirabilis (Parasitic liverwort).